We begin with the raw amino-acid sequence, 124 residues long: MSDILFVSIGAILGANIRFQIHHKLGNLNLDKGFLILIINTFASFGLGLFLSLVEQFRAFTYSYQLILFFSIGFFGSLSTFSSFVYDLFDLCLQLELFRALKLFIISVSIGIIAFAFGLFLGTQ.

Transmembrane regions (helical) follow at residues 1–21, 34–54, 66–86, and 103–123; these read MSDILFVSIGAILGANIRFQI, FLILIINTFASFGLGLFLSLV, LILFFSIGFFGSLSTFSSFVY, and LFIISVSIGIIAFAFGLFLGT. Residues glycine 76 and serine 79 each contribute to the Na(+) site.

It belongs to the fluoride channel Fluc/FEX (TC 1.A.43) family.

It localises to the cell inner membrane. The catalysed reaction is fluoride(in) = fluoride(out). Its activity is regulated as follows. Na(+) is not transported, but it plays an essential structural role and its presence is essential for fluoride channel function. Functionally, fluoride-specific ion channel. Important for reducing fluoride concentration in the cell, thus reducing its toxicity. The sequence is that of Fluoride-specific ion channel FluC 2 from Prochlorococcus marinus (strain NATL2A).